The primary structure comprises 73 residues: Large ribosomal subunit protein bL31 (73 aa).

The protein belongs to the bacterial ribosomal protein bL31 family. Type A subfamily. In terms of assembly, part of the 50S ribosomal subunit.

Its function is as follows. Binds the 23S rRNA. The polypeptide is Large ribosomal subunit protein bL31 (Rhizobium johnstonii (strain DSM 114642 / LMG 32736 / 3841) (Rhizobium leguminosarum bv. viciae)).